The sequence spans 227 residues: uncharacterized protein (227 aa).

The next 2 membrane-spanning stretches (helical) occupy residues 113–133 and 141–161; these read IMLI…FIVF and FGIC…NGLI.

It localises to the membrane. This is an uncharacterized protein from Dictyostelium discoideum (Social amoeba).